A 190-amino-acid chain; its full sequence is Nuclear transcription factor Y subunit A-7 (190 aa).

The interval 1 to 33 (MTSSIHELSDNIGSHEKQEQRDSHFQPPIPSAR) is disordered. The span at 7–24 (ELSDNIGSHEKQEQRDSH) shows a compositional bias: basic and acidic residues. Positions 103-126 (FVNAKQYHGILRRRQSRARLESQN) match the Subunit association domain (SAD) motif. A DNA-binding region (NFYA/HAP2-type) is located at residues 133–158 (KPYLHESRHLHAIRRPRGCGGRFLNA). Positions 147-190 (RPRGCGGRFLNAKKEDEHHEDSSHEEKSNLSAGKSAMAASSGTS) are disordered. Residues 158–174 (AKKEDEHHEDSSHEEKS) are compositionally biased toward basic and acidic residues. Low complexity predominate over residues 177–190 (SAGKSAMAASSGTS).

It belongs to the NFYA/HAP2 subunit family. In terms of assembly, heterotrimeric transcription factor composed of three components, NF-YA, NF-YB and NF-YC. NF-YB and NF-YC must interact and dimerize for NF-YA association and DNA binding.

It is found in the nucleus. In terms of biological role, stimulates the transcription of various genes by recognizing and binding to a CCAAT motif in promoters. The protein is Nuclear transcription factor Y subunit A-7 (NFYA7) of Arabidopsis thaliana (Mouse-ear cress).